Here is a 274-residue protein sequence, read N- to C-terminus: NADPH-dependent 7-cyano-7-deazaguanine reductase (274 aa).

A substrate-binding site is contributed by 80–82; it reads VES. Position 82-83 (82-83) interacts with NADPH; that stretch reads SK. The active-site Thioimide intermediate is Cys181. Residue Asp188 is the Proton donor of the active site. 220-221 provides a ligand contact to substrate; it reads HE. 249–250 is an NADPH binding site; the sequence is RG.

It belongs to the GTP cyclohydrolase I family. QueF type 2 subfamily. Homodimer.

The protein localises to the cytoplasm. The catalysed reaction is 7-aminomethyl-7-carbaguanine + 2 NADP(+) = 7-cyano-7-deazaguanine + 2 NADPH + 3 H(+). It functions in the pathway tRNA modification; tRNA-queuosine biosynthesis. Functionally, catalyzes the NADPH-dependent reduction of 7-cyano-7-deazaguanine (preQ0) to 7-aminomethyl-7-deazaguanine (preQ1). The polypeptide is NADPH-dependent 7-cyano-7-deazaguanine reductase (Burkholderia lata (strain ATCC 17760 / DSM 23089 / LMG 22485 / NCIMB 9086 / R18194 / 383)).